The chain runs to 280 residues: Phosphonates import ATP-binding protein PhnC (280 aa).

In terms of domain architecture, ABC transporter spans 4–239 (ITVTNLHKSY…VIDDIYGNIQ (236 aa)). 36–43 (GESGAGKS) provides a ligand contact to ATP. Residues 246–280 (GDDANADVAPTTSSDGGTDAAGGPDQQPASDPHLS) form a disordered region.

Belongs to the ABC transporter superfamily. Phosphonates importer (TC 3.A.1.9.1) family. In terms of assembly, the complex is composed of two ATP-binding proteins (PhnC), two transmembrane proteins (PhnE) and a solute-binding protein (PhnD).

It is found in the cell membrane. The catalysed reaction is phosphonate(out) + ATP + H2O = phosphonate(in) + ADP + phosphate + H(+). Part of the ABC transporter complex PhnCDE involved in phosphonates import. Responsible for energy coupling to the transport system. The protein is Phosphonates import ATP-binding protein PhnC of Halobacterium salinarum (strain ATCC 700922 / JCM 11081 / NRC-1) (Halobacterium halobium).